A 90-amino-acid chain; its full sequence is Lectin-1 (90 aa).

Q1 carries the post-translational modification Pyrrolidone carboxylic acid. C46 and C71 form a disulfide bridge.

The N-terminus is blocked. Post-translationally, contains seven disulfide bonds. In terms of processing, proteolytically cleaved. Major form may consist of cleaved, disulfide-bonded subunits.

Lectin with specificity for complex N-linked glycans and O-linked glycans. Has hemagglutinating activity towards rabbit erythrocytes that is inhibited by N-acetyl-D-galactosamine. The sequence is that of Lectin-1 from Hypnea cervicornis (Brazilian red alga).